Reading from the N-terminus, the 610-residue chain is Ubiquilin-like protein (610 aa).

The Ubiquitin-like domain occupies 31–105 (IRVIVKTPGN…IHVVIKSKHG (75 aa)). In terms of domain architecture, UBA spans 562–607 (QAPEVRFSKEMECLQAMGFVNYNANLQALIATDGDTNAAIYKLKSS).

This is Ubiquilin-like protein (Ubqlnl) from Mus musculus (Mouse).